The sequence spans 315 residues: Homoserine kinase (315 aa).

97 to 107 (PPARGLGSSAT) is a binding site for ATP.

Belongs to the GHMP kinase family. Homoserine kinase subfamily.

The protein resides in the cytoplasm. It catalyses the reaction L-homoserine + ATP = O-phospho-L-homoserine + ADP + H(+). It functions in the pathway amino-acid biosynthesis; L-threonine biosynthesis; L-threonine from L-aspartate: step 4/5. Catalyzes the ATP-dependent phosphorylation of L-homoserine to L-homoserine phosphate. The sequence is that of Homoserine kinase from Prochlorococcus marinus (strain MIT 9215).